The following is a 703-amino-acid chain: Fibulin-1 (703 aa).

The N-terminal stretch at 1–29 is a signal peptide; sequence MERAAPSRRVPLPLLLLGGLALLAAGVDA. 35 cysteine pairs are disulfide-bonded: C36–C61, C37–C68, C50–C69, C78–C109, C91–C110, C112–C136, C113–C143, C126–C144, C180–C190, C186–C199, C201–C214, C220–C233, C227–C242, C248–C260, C266–C279, C273–C288, C294–C306, C312–C325, C319–C334, C341–C354, C360–C373, C367–C382, C384–C397, C403–C415, C411–C424, C426–C439, C445–C454, C450–C463, C465–C479, C485–C498, C494–C507, C509–C523, C529–C542, C536–C551, and C556–C577. Anaphylatoxin-like domains are found at residues 36-76, 77-111, and 112-144; these read CCAD…LEEL, HCATGISLANEQDRCATPHGDNASLEATFVKRCCH, and CCLLGRAAQAQGQSCEYSLMVGYQCGQVFQACC. An N-linked (GlcNAc...) (complex) asparagine glycan is attached at N98. An EGF-like 1 domain is found at 176 to 215; sequence LNDRCRGGGPCKQQCRDTGDEVVCSCFVGYQLLSDGVSCE. The region spanning 216–261 is the EGF-like 2; calcium-binding domain; the sequence is DVNECITGSHSCRLGESCINTVGSFRCQRDSSCGTGYELTEDNSCK. The region spanning 262 to 307 is the EGF-like 3; calcium-binding domain; the sequence is DIDECESGIHNCLPDFICQNTLGSFRCRPKLQCKSGFIQDALGNCI. One can recognise an EGF-like 4; calcium-binding domain in the interval 308-355; the sequence is DINECLSISAPCPIGHTCINTEGSYTCQKNVPNCGRGYHLNEEGTRCV. Residues 356 to 398 form the EGF-like 5; calcium-binding domain; sequence DVDECAPPAEPCGKGHRCVNSPGSFRCECKTGYYFDGISRMCV. Residues 356–440 are self-association and FN1-binding; calcium is necessary for homotypic binding, but not for heterotypic binding; that stretch reads DVDECAPPAE…RLSVDGRSCE (85 aa). Residues 399–440 enclose the EGF-like 6; calcium-binding domain; the sequence is DVNECQRYPGRLCGHKCENTLGSYLCSCSVGFRLSVDGRSCE. An EGF-like 7; calcium-binding domain is found at 441–480; that stretch reads DINECSSSPCSQECANVYGSYQCYCRRGYQLSDVDGVTCE. The EGF-like 8; calcium-binding domain occupies 481 to 524; sequence DIDECALPTGGHICSYRCINIPGSFQCSCPSSGYRLAPNGRNCQ. Positions 525 to 578 constitute an EGF-like 9; calcium-binding domain; it reads DIDECVTGIHNCSINETCFNIQGGFRCLAFECPENYRRSAATLQQEKTDTVRCI. N-linked (GlcNAc...) asparagine glycosylation is found at N535 and N539.

The protein belongs to the fibulin family. Homomultimerizes and interacts with various extracellular matrix components such as FN1, LAMA1, LAMA2, NID, ACAN, CSPG2 and type IV collagen. Also interacts with APP and FGB. Interacts with FBLN7. Interacts with CCN3. In terms of assembly, (Microbial infection) Interacts with human papillomavirus/HPV type 16, 18 and 31 proteins E6. In terms of tissue distribution, isoform A and isoform B are only expressed in placenta. Isoform C and isoform D are expressed in a variety of tissues and cultured cells.

Its subcellular location is the secreted. The protein localises to the extracellular space. It localises to the extracellular matrix. Functionally, incorporated into fibronectin-containing matrix fibers. May play a role in cell adhesion and migration along protein fibers within the extracellular matrix (ECM). Could be important for certain developmental processes and contribute to the supramolecular organization of ECM architecture, in particular to those of basement membranes. Has been implicated in a role in cellular transformation and tumor invasion, it appears to be a tumor suppressor. May play a role in haemostasis and thrombosis owing to its ability to bind fibrinogen and incorporate into clots. Could play a significant role in modulating the neurotrophic activities of APP, particularly soluble APP. The chain is Fibulin-1 (FBLN1) from Homo sapiens (Human).